Consider the following 603-residue polypeptide: DNA mismatch repair protein MutL (603 aa).

It belongs to the DNA mismatch repair MutL/HexB family.

In terms of biological role, this protein is involved in the repair of mismatches in DNA. It is required for dam-dependent methyl-directed DNA mismatch repair. May act as a 'molecular matchmaker', a protein that promotes the formation of a stable complex between two or more DNA-binding proteins in an ATP-dependent manner without itself being part of a final effector complex. The protein is DNA mismatch repair protein MutL of Listeria monocytogenes serotype 4a (strain HCC23).